We begin with the raw amino-acid sequence, 108 residues long: Peptidyl-prolyl cis-trans isomerase FKBP1A (108 aa).

A PPIase FKBP-type domain is found at 20–108 (GQTCVVHYTG…IFDVELLKLE (89 aa)). An N6-acetyllysine; alternate modification is found at K53. K53 bears the N6-succinyllysine; alternate mark.

The protein belongs to the FKBP-type PPIase family. FKBP1 subfamily. As to quaternary structure, interacts with TGFBR1; prevents TGFBR1 phosphorylation by TGFBR2 and stabilizes it in the inactive conformation. Interacts with ACVR1B and SMAD7. Identified in a complex composed of RYR1, PDE4D, PKA, FKBP1A and protein phosphatase 1 (PP1). Interacts directly with RYR2 and RYR3. Interacts with GLMN; rapamycin and FK506 abolish the interaction with GLMN in a dose dependent manner. Interacts directly with RYR1.

It is found in the cytoplasm. The protein resides in the cytosol. The protein localises to the sarcoplasmic reticulum membrane. It carries out the reaction [protein]-peptidylproline (omega=180) = [protein]-peptidylproline (omega=0). With respect to regulation, inhibited by both FK506 and rapamycin. Keeps in an inactive conformation TGFBR1, the TGF-beta type I serine/threonine kinase receptor, preventing TGF-beta receptor activation in absence of ligand. May modulate the RYR1 calcium channel activity. PPIases accelerate the folding of proteins. It catalyzes the cis-trans isomerization of proline imidic peptide bonds in oligopeptides. The chain is Peptidyl-prolyl cis-trans isomerase FKBP1A (FKBP1A) from Bos taurus (Bovine).